The primary structure comprises 228 residues: Urease accessory protein UreF (228 aa).

Belongs to the UreF family. In terms of assembly, ureD, UreF and UreG form a complex that acts as a GTP-hydrolysis-dependent molecular chaperone, activating the urease apoprotein by helping to assemble the nickel containing metallocenter of UreC. The UreE protein probably delivers the nickel.

The protein localises to the cytoplasm. Functionally, required for maturation of urease via the functional incorporation of the urease nickel metallocenter. The protein is Urease accessory protein UreF of Yersinia pestis bv. Antiqua (strain Antiqua).